The following is a 193-amino-acid chain: Ribosomal RNA small subunit methyltransferase G (193 aa).

S-adenosyl-L-methionine contacts are provided by residues G72, F77, 123 to 124 (IE), and R137.

The protein belongs to the methyltransferase superfamily. RNA methyltransferase RsmG family.

It is found in the cytoplasm. It catalyses the reaction guanosine(527) in 16S rRNA + S-adenosyl-L-methionine = N(7)-methylguanosine(527) in 16S rRNA + S-adenosyl-L-homocysteine. Specifically methylates the N7 position of guanine in position 527 of 16S rRNA. The protein is Ribosomal RNA small subunit methyltransferase G of Wolinella succinogenes (strain ATCC 29543 / DSM 1740 / CCUG 13145 / JCM 31913 / LMG 7466 / NCTC 11488 / FDC 602W) (Vibrio succinogenes).